The chain runs to 145 residues: UPF0179 protein Maeo_1037 (145 aa).

It belongs to the UPF0179 family.

The protein is UPF0179 protein Maeo_1037 of Methanococcus aeolicus (strain ATCC BAA-1280 / DSM 17508 / OCM 812 / Nankai-3).